The following is a 113-amino-acid chain: MTNICDLADRKCKPCEGGVPPLRKEEAENLLKQLEQGWQLADNRISRTFSFKNYYQTMAFVNAVAWVSHQEDHHPDMMVGYNQCRVEYTTHAIGGLSENDFICAAKVDMLLIS.

It belongs to the pterin-4-alpha-carbinolamine dehydratase family.

It carries out the reaction (4aS,6R)-4a-hydroxy-L-erythro-5,6,7,8-tetrahydrobiopterin = (6R)-L-erythro-6,7-dihydrobiopterin + H2O. The polypeptide is Putative pterin-4-alpha-carbinolamine dehydratase (Nitrosomonas eutropha (strain DSM 101675 / C91 / Nm57)).